A 97-amino-acid polypeptide reads, in one-letter code: Alpha-latrotoxin associated low molecular weight protein 2 (97 aa).

The first 19 residues, Met1 to Ala19, serve as a signal peptide directing secretion. 3 cysteine pairs are disulfide-bonded: Cys36-Cys72, Cys52-Cys68, and Cys55-Cys81.

Belongs to the arthropod CHH/MIH/GIH/VIH hormone family. Expressed by the venom gland.

Its subcellular location is the secreted. May increase the toxicity of alpha-latrotoxin and/or other venom components. Is non-toxic to mice and to the cockroach Periplaneta americana. This Steatoda grossa (False black widow) protein is Alpha-latrotoxin associated low molecular weight protein 2.